The chain runs to 760 residues: DNA-directed RNA polymerase subunit beta' (760 aa).

4 residues coordinate Zn(2+): cysteine 76, cysteine 78, cysteine 90, and cysteine 93. Mg(2+) contacts are provided by aspartate 594, aspartate 596, and aspartate 598.

The protein belongs to the RNA polymerase beta' chain family. RpoC1 subfamily. In plastids the minimal PEP RNA polymerase catalytic core is composed of four subunits: alpha, beta, beta', and beta''. When a (nuclear-encoded) sigma factor is associated with the core the holoenzyme is formed, which can initiate transcription. Requires Mg(2+) as cofactor. Zn(2+) serves as cofactor.

It localises to the plastid. It is found in the chloroplast. It catalyses the reaction RNA(n) + a ribonucleoside 5'-triphosphate = RNA(n+1) + diphosphate. Its function is as follows. DNA-dependent RNA polymerase catalyzes the transcription of DNA into RNA using the four ribonucleoside triphosphates as substrates. This Bigelowiella natans (Pedinomonas minutissima) protein is DNA-directed RNA polymerase subunit beta'.